A 295-amino-acid polypeptide reads, in one-letter code: Inositol polyphosphate multikinase IPK2 (295 aa).

Residues 1–21 (MASDLRPPEHQVAGHRASADK) are disordered.

It belongs to the inositol phosphokinase (IPK) family.

The catalysed reaction is 1D-myo-inositol 1,4,5-trisphosphate + 2 ATP = 1D-myo-inositol 1,3,4,5,6-pentakisphosphate + 2 ADP + 2 H(+). It catalyses the reaction 1D-myo-inositol 1,3,4,6-tetrakisphosphate + ATP = 1D-myo-inositol 1,3,4,5,6-pentakisphosphate + ADP + H(+). Inositol phosphate kinase with a broad substrate specificity. Phosphorylates inositol 1,4,5-trisphosphate (Ins(1,4,5)P3), inositol 1,4,5,6-tetrakisphosphate (Ins(1,4,5,6)P4), inositol 1,3,4,5-tetrakisphosphate (Ins(1,3,4,5)P4), inositol 1,3,4,6-tetrakisphosphate (Ins(1,3,4,6)P4) and inositol 1,2,3,4,6-pentakisphosphate (Ins(1,2,3,4,6)P5) but not inositol 1,4-bisphosphate (Ins(1,4)P2), inositol 1,3,4-trisphosphate (Ins(1,3,4)P3), inositol 1,2,6-trisphosphate (Ins(1,2,6)P3), inositol 3,4,5,6-tetrakisphosphate (Ins(3,4,5,6)P4), inositol 1,3,4,5,6-pentakisphosphate (Ins(1,3,4,5,6)P5), inositol 1,2,4,5,6-pentakisphosphate (Ins(1,2,4,5,6)P5) or inositol hexakisphosphate (InsP6). Regulates pollen and root development probably through the regulation of InsP3-mediated calcium accumulation. The chain is Inositol polyphosphate multikinase IPK2 from Oryza sativa subsp. indica (Rice).